Consider the following 523-residue polypeptide: Cilia- and flagella-associated protein 157 (523 aa).

Residues 1 to 31 (MAPKKKPNKGGKEMQGKKIGGKKDASGTKTP) form a disordered region. A compositionally biased stretch (basic and acidic residues) spans 10 to 26 (GGKEMQGKKIGGKKDAS). Phosphothreonine is present on T30. Coiled coils occupy residues 32–191 (ELAM…LEKK), 248–274 (VQLLQENEQLKGTQNKLCQQLEMLENT), and 302–371 (GTEE…VLIQ). The interval 419–440 (QPDMGSHQDKQPQGLSKESQRI) is disordered. Polar residues predominate over residues 429–440 (QPQGLSKESQRI).

It belongs to the CFAP157 family. As to quaternary structure, interacts with TUBB and TUBA4A. Interacts with CEP350. As to expression, specifically expressed in tissues containing motile cilia.

Its subcellular location is the cytoplasm. It is found in the cytoskeleton. The protein resides in the cilium basal body. In terms of biological role, specifically required during spermatogenesis for flagellum morphogenesis and sperm motility. May be required to suppress the formation of supernumerary axonemes and ensure a correct ultrastructure. The protein is Cilia- and flagella-associated protein 157 of Mus musculus (Mouse).